Consider the following 188-residue polypeptide: Ribosome-recycling factor (188 aa).

Belongs to the RRF family.

It localises to the cytoplasm. In terms of biological role, responsible for the release of ribosomes from messenger RNA at the termination of protein biosynthesis. May increase the efficiency of translation by recycling ribosomes from one round of translation to another. This is Ribosome-recycling factor from Lawsonia intracellularis (strain PHE/MN1-00).